The following is a 224-amino-acid chain: Transcriptional regulatory protein TctD (224 aa).

The 115-residue stretch at 2–116 (RLLLAEDNRE…ELDARLRALL (115 aa)) folds into the Response regulatory domain. Residue D51 is modified to 4-aspartylphosphate. The segment at residues 121-219 (GQVHEVQQLG…LRGLGYVLER (99 aa)) is a DNA-binding region (ompR/PhoB-type).

Functionally, transcriptional activator of the tctI tricarboxylate transport system operon. The sequence is that of Transcriptional regulatory protein TctD (tctD) from Salmonella typhimurium (strain SL1344).